The sequence spans 396 residues: DNA polymerase processivity factor (396 aa).

Residues A306–I396 form a disordered region. The segment covering S376–K386 has biased composition (basic and acidic residues).

Belongs to the herpesviridae DNA polymerase accessory subunit family. In terms of assembly, homooligomerizes and adopts an oligomeric ring-shaped structure composed of 6 subunits. Forms a complex with the DNA-binding protein, the DNA polymerase subunit, and the alkaline exonuclease.

It is found in the virion tegument. Its subcellular location is the host nucleus. Plays an essential role in the viral lytic DNA replication by acting as the polymerase accessory subunit. Stimulates the viral DNA polymerase activity and appears to function with it as a holoenzyme. Increases the processivity of the viral polymerase, probably by acting as a sliding clamp that prevents dissociation of the polymerase from the active template. This is DNA polymerase processivity factor (ORF59) from Homo sapiens (Human).